The following is a 234-amino-acid chain: Sugar fermentation stimulation protein homolog (234 aa).

This sequence belongs to the SfsA family.

The protein is Sugar fermentation stimulation protein homolog of Shewanella loihica (strain ATCC BAA-1088 / PV-4).